Consider the following 243-residue polypeptide: Protein YagJ (243 aa).

The polypeptide is Protein YagJ (yagJ) (Escherichia coli (strain K12)).